Here is a 278-residue protein sequence, read N- to C-terminus: Undecaprenyl-diphosphatase (278 aa).

Helical transmembrane passes span 14–34 (GTTEFLPISSSAHLIVLPWLF), 40–60 (GLAFNVALHLGTLSAVLAYFW), 89–109 (WAVIIGSLPAGLAGFFLNDVI), 121–141 (TAIVFTSLLLIVLGFVLWLAE), 153–173 (LGLRDGLVVGLAQALALLPGV), 196–216 (FSFILGIPAIAGAGLLETLKL), 227–247 (VLFVTGVASAAITGFLAIAFL), and 257–277 (SIFIVYRIALGLVLLLVVSFA).

The protein belongs to the UppP family.

The protein localises to the cell membrane. The enzyme catalyses di-trans,octa-cis-undecaprenyl diphosphate + H2O = di-trans,octa-cis-undecaprenyl phosphate + phosphate + H(+). Catalyzes the dephosphorylation of undecaprenyl diphosphate (UPP). Confers resistance to bacitracin. The chain is Undecaprenyl-diphosphatase from Thermomicrobium roseum (strain ATCC 27502 / DSM 5159 / P-2).